The sequence spans 466 residues: Asparagine--tRNA ligase (466 aa).

The protein belongs to the class-II aminoacyl-tRNA synthetase family. As to quaternary structure, homodimer.

The protein resides in the cytoplasm. The enzyme catalyses tRNA(Asn) + L-asparagine + ATP = L-asparaginyl-tRNA(Asn) + AMP + diphosphate + H(+). The polypeptide is Asparagine--tRNA ligase (Serratia proteamaculans (strain 568)).